The sequence spans 192 residues: Sarcoplasmic calcium-binding protein 1 (192 aa).

Residue A1 is modified to N-acetylalanine. 4 consecutive EF-hand domains span residues 4–39 (WDNRVKYVVRYMYDIDNNGFLDKNDFECLALRNTLI), 56–91 (IMSNLWNEIAELADFNKDGEVTIDEFKKAVQNVCVG), 100–135 (AFKVFIANQFKTVDVNGDGLVGVDEYRLDCISRSAF), and 136–171 (ANIKEIDDAYNKLATDADKKAGGISLARYQELYAQF). Ca(2+) contacts are provided by D17, D19, N21, D28, D69, N71, D73, E75, E80, D113, N115, D117, and E124.

SCPs from crayfish, lobster, and shrimp are polymorphic dimers.

Like parvalbumins, SCPs seem to be more abundant in fast contracting muscles, but no functional relationship can be established from this distribution. The sequence is that of Sarcoplasmic calcium-binding protein 1 from Astacus leptodactylus (Turkish narrow-clawed crayfish).